Consider the following 250-residue polypeptide: 2,3-bisphosphoglycerate-dependent phosphoglycerate mutase (250 aa).

Substrate-binding positions include 8–15, 21–22, R60, 87–90, K98, 114–115, and 183–184; these read RHGESQWN, TG, ERHY, RR, and GN. H9 functions as the Tele-phosphohistidine intermediate in the catalytic mechanism. E87 (proton donor/acceptor) is an active-site residue.

The protein belongs to the phosphoglycerate mutase family. BPG-dependent PGAM subfamily. As to quaternary structure, homodimer.

It catalyses the reaction (2R)-2-phosphoglycerate = (2R)-3-phosphoglycerate. It participates in carbohydrate degradation; glycolysis; pyruvate from D-glyceraldehyde 3-phosphate: step 3/5. Its function is as follows. Catalyzes the interconversion of 2-phosphoglycerate and 3-phosphoglycerate. The protein is 2,3-bisphosphoglycerate-dependent phosphoglycerate mutase of Bordetella petrii (strain ATCC BAA-461 / DSM 12804 / CCUG 43448).